The following is an 876-amino-acid chain: Alanine--tRNA ligase (876 aa).

Residue Lys-74 is modified to N6-acetyllysine. Residues His-564, His-568, Cys-666, and His-670 each coordinate Zn(2+).

The protein belongs to the class-II aminoacyl-tRNA synthetase family. As to quaternary structure, homotetramer. Zn(2+) serves as cofactor.

The protein localises to the cytoplasm. The enzyme catalyses tRNA(Ala) + L-alanine + ATP = L-alanyl-tRNA(Ala) + AMP + diphosphate. In terms of biological role, catalyzes the attachment of alanine to tRNA(Ala) in a two-step reaction: alanine is first activated by ATP to form Ala-AMP and then transferred to the acceptor end of tRNA(Ala). Also edits incorrectly charged Ser-tRNA(Ala) and Gly-tRNA(Ala) via its editing domain. This is Alanine--tRNA ligase from Escherichia coli O157:H7.